The following is a 350-amino-acid chain: Divinyl chlorophyll a/b light-harvesting protein PcbB (350 aa).

The next 6 membrane-spanning stretches (helical) occupy residues 27 to 47 (FLAA…SFTL), 89 to 109 (IVVT…GGLM), 141 to 161 (FILG…VEWA), 202 to 222 (VMGG…WHIV), 244 to 264 (LSWA…WCAS), and 305 to 325 (LTNI…WHAL).

Belongs to the PsbB/PsbC family. IsiA/Pcb subfamily. In terms of assembly, the antenna complex consists of divinyl chlorophylls (a and b) and divinyl chlorophyll a/b binding proteins. Under iron-starvation forms a complex with PSI, consisting of a PSI trimer surrounded by a ring composed of 18 PcbB subunits. It depends on divinyl chlorophyll a as a cofactor. Divinyl chlorophyll b is required as a cofactor.

Its subcellular location is the cellular thylakoid membrane. In terms of biological role, the antenna complex functions as a light receptor, it captures and delivers excitation energy to photosystems I. The Prochlorales pcb genes are not related to higher plant LHCs. This Prochlorococcus marinus (strain MIT 9313) protein is Divinyl chlorophyll a/b light-harvesting protein PcbB (pcbB).